The primary structure comprises 275 residues: Adenylate kinase (275 aa).

54 to 59 (GAGKGT) contributes to the ATP binding site. The interval 74–103 (ATGDMLRSQVAKKTPLGREAKKIMDQGGLV) is NMP. AMP-binding positions include T75, R80, 101-103 (GLV), 130-133 (GFPR), and Q137. The interval 171 to 208 (GRLVHPASGRSYHRVFNPPKAEMKDDITGEPLVSRSDD) is LID. ATP-binding positions include R172 and 181–182 (SY). 2 residues coordinate AMP: R205 and R216. Position 244 (Q244) interacts with ATP.

Belongs to the adenylate kinase family. AK2 subfamily. Monomer.

It is found in the cytoplasm. The protein localises to the cytosol. It localises to the mitochondrion intermembrane space. It carries out the reaction AMP + ATP = 2 ADP. Functionally, catalyzes the reversible transfer of the terminal phosphate group between ATP and AMP. Plays an important role in cellular energy homeostasis and in adenine nucleotide metabolism. Adenylate kinase activity is critical for regulation of the phosphate utilization and the AMP de novo biosynthesis pathways. This is Adenylate kinase (adk1) from Sclerotinia sclerotiorum (strain ATCC 18683 / 1980 / Ss-1) (White mold).